Reading from the N-terminus, the 395-residue chain is 1-deoxy-D-xylulose 5-phosphate reductoisomerase (395 aa).

The NADPH site is built by Thr-10, Gly-11, Ser-12, Ile-13, Asn-38, and Asn-122. Lys-123 lines the 1-deoxy-D-xylulose 5-phosphate pocket. Glu-124 is a binding site for NADPH. Asp-148 lines the Mn(2+) pocket. 1-deoxy-D-xylulose 5-phosphate contacts are provided by Ser-149, Glu-150, Ser-178, and His-200. Residue Glu-150 participates in Mn(2+) binding. Residue Gly-206 coordinates NADPH. 4 residues coordinate 1-deoxy-D-xylulose 5-phosphate: Ser-213, Asn-218, Lys-219, and Glu-222. Glu-222 is a Mn(2+) binding site.

This sequence belongs to the DXR family. Mg(2+) is required as a cofactor. Mn(2+) serves as cofactor.

It catalyses the reaction 2-C-methyl-D-erythritol 4-phosphate + NADP(+) = 1-deoxy-D-xylulose 5-phosphate + NADPH + H(+). It participates in isoprenoid biosynthesis; isopentenyl diphosphate biosynthesis via DXP pathway; isopentenyl diphosphate from 1-deoxy-D-xylulose 5-phosphate: step 1/6. Functionally, catalyzes the NADPH-dependent rearrangement and reduction of 1-deoxy-D-xylulose-5-phosphate (DXP) to 2-C-methyl-D-erythritol 4-phosphate (MEP). This Elusimicrobium minutum (strain Pei191) protein is 1-deoxy-D-xylulose 5-phosphate reductoisomerase.